Consider the following 61-residue polypeptide: Insect toxin BsIT2 (61 aa).

In terms of domain architecture, LCN-type CS-alpha/beta spans D1–K61. Disulfide bonds link C10-C60, C14-C35, C21-C42, and C25-C44.

The protein belongs to the long (4 C-C) scorpion toxin superfamily. Sodium channel inhibitor family. Beta subfamily. Expressed by the venom gland.

It localises to the secreted. Functionally, depressant insect beta-toxins cause a transient contraction paralysis followed by a slow flaccid paralysis. They bind voltage-independently at site-4 of sodium channels (Nav) and shift the voltage of activation toward more negative potentials thereby affecting sodium channel activation and promoting spontaneous and repetitive firing. This toxin is active only on insects. The chain is Insect toxin BsIT2 from Hottentotta tamulus sindicus (Scorpion).